The primary structure comprises 266 residues: uncharacterized protein (266 aa).

This is an uncharacterized protein from Ostreid herpesvirus 1 (isolate France) (OsHV-1).